A 431-amino-acid chain; its full sequence is Trigger factor (431 aa).

The PPIase FKBP-type domain occupies 165-250 (TDTAVFDFEG…LHQIKTKKIP (86 aa)).

It belongs to the FKBP-type PPIase family. Tig subfamily.

Its subcellular location is the cytoplasm. It catalyses the reaction [protein]-peptidylproline (omega=180) = [protein]-peptidylproline (omega=0). Involved in protein export. Acts as a chaperone by maintaining the newly synthesized protein in an open conformation. Functions as a peptidyl-prolyl cis-trans isomerase. The chain is Trigger factor from Aster yellows witches'-broom phytoplasma (strain AYWB).